We begin with the raw amino-acid sequence, 187 residues long: Crossover junction endodeoxyribonuclease RuvC (187 aa).

Active-site residues include D7, E67, and D140. Mg(2+) contacts are provided by D7, E67, and D140.

The protein belongs to the RuvC family. Homodimer which binds Holliday junction (HJ) DNA. The HJ becomes 2-fold symmetrical on binding to RuvC with unstacked arms; it has a different conformation from HJ DNA in complex with RuvA. In the full resolvosome a probable DNA-RuvA(4)-RuvB(12)-RuvC(2) complex forms which resolves the HJ. It depends on Mg(2+) as a cofactor.

It is found in the cytoplasm. It carries out the reaction Endonucleolytic cleavage at a junction such as a reciprocal single-stranded crossover between two homologous DNA duplexes (Holliday junction).. The RuvA-RuvB-RuvC complex processes Holliday junction (HJ) DNA during genetic recombination and DNA repair. Endonuclease that resolves HJ intermediates. Cleaves cruciform DNA by making single-stranded nicks across the HJ at symmetrical positions within the homologous arms, yielding a 5'-phosphate and a 3'-hydroxyl group; requires a central core of homology in the junction. The consensus cleavage sequence is 5'-(A/T)TT(C/G)-3'. Cleavage occurs on the 3'-side of the TT dinucleotide at the point of strand exchange. HJ branch migration catalyzed by RuvA-RuvB allows RuvC to scan DNA until it finds its consensus sequence, where it cleaves and resolves the cruciform DNA. The chain is Crossover junction endodeoxyribonuclease RuvC from Prosthecochloris aestuarii (strain DSM 271 / SK 413).